Consider the following 291-residue polypeptide: Urease accessory protein UreD (291 aa).

It belongs to the UreD family. As to quaternary structure, ureD, UreF and UreG form a complex that acts as a GTP-hydrolysis-dependent molecular chaperone, activating the urease apoprotein by helping to assemble the nickel containing metallocenter of UreC. The UreE protein probably delivers the nickel.

It localises to the cytoplasm. Its function is as follows. Required for maturation of urease via the functional incorporation of the urease nickel metallocenter. This chain is Urease accessory protein UreD, found in Acinetobacter baumannii (strain SDF).